The chain runs to 292 residues: MYSAIRSSLPLDGSLGDYSDGTNLPIDACLVLTTDPKPRLRWTSELHERFVDAVTQLGGPDKATPKTIMRTMGVKGLTLYHLKSHLQKFRLGRQSCKESIDNSKDVSCVAESQDTGSSSTSSLRLAAQEQNESYQVTEALRAQMEVQRRLHEQLEVQRRLQLRIEAQGKYLQSILEKACKAIEEQAVAFAGLEAAREELSELAIKASITNGCQGTTSTFDTTKMMIPSLSELAVAIEHKNNCSAESSLTSSTVGSPVSAALMKKRQRGVFGNGDSVVVGHDAGWVMPSSSIG.

The 61-residue stretch at 34 to 94 (TDPKPRLRWT…HLQKFRLGRQ (61 aa)) folds into the HTH myb-type domain. The segment at residues 65 to 90 (PKTIMRTMGVKGLTLYHLKSHLQKFR) is a DNA-binding region (H-T-H motif). Residues 137 to 157 (TEALRAQMEVQRRLHEQLEVQ) adopt a coiled-coil conformation. The short motif at 150-155 (LHEQLE) is the LHEQLE element.

This sequence belongs to the MYB-CC family. As to quaternary structure, homo- and heterodimers. Interacts with PHL2, but not with PHR1.

The protein localises to the nucleus. In terms of biological role, transcriptional activator. Probable component of the central regulatory system controlling transcriptional responses to Pi starvation. Binds in a sequence-specific manner to phosphate starvation-regulated promoters. Required for female gametophyte development and function. The chain is Protein PHR1-LIKE 3 from Arabidopsis thaliana (Mouse-ear cress).